The following is a 482-amino-acid chain: Mannose-1-phosphate guanylyltransferase 2 (482 aa).

The protein belongs to the mannose-6-phosphate isomerase type 2 family.

It carries out the reaction alpha-D-mannose 1-phosphate + GTP + H(+) = GDP-alpha-D-mannose + diphosphate. It participates in nucleotide-sugar biosynthesis; GDP-alpha-D-mannose biosynthesis; GDP-alpha-D-mannose from alpha-D-mannose 1-phosphate (GTP route): step 1/1. In terms of biological role, involved in GDP-mannose biosynthesis which serves as the activated sugar nucleotide precursor for mannose residues in cell surface polysaccharides. This enzyme participates in synthesis of the LPS O antigen. The protein is Mannose-1-phosphate guanylyltransferase 2 (manC2) of Escherichia coli O157:H7.